A 404-amino-acid polypeptide reads, in one-letter code: Cysteine desulfurase IscS (404 aa).

Residues 75–76 (AT), N155, Q183, and 203–205 (SAH) each bind pyridoxal 5'-phosphate. Position 206 is an N6-(pyridoxal phosphate)lysine (K206). Residue T243 participates in pyridoxal 5'-phosphate binding. C328 acts as the Cysteine persulfide intermediate in catalysis. Residue C328 participates in [2Fe-2S] cluster binding.

The protein belongs to the class-V pyridoxal-phosphate-dependent aminotransferase family. NifS/IscS subfamily. As to quaternary structure, homodimer. Forms a heterotetramer with IscU, probably interacts with other sulfur acceptors. Pyridoxal 5'-phosphate serves as cofactor.

It is found in the cytoplasm. It catalyses the reaction (sulfur carrier)-H + L-cysteine = (sulfur carrier)-SH + L-alanine. The protein operates within cofactor biosynthesis; iron-sulfur cluster biosynthesis. Inhibited by equimolar N-iodoacetyl-N'-(5-sulfo-1-naphthyl)ethylenediamine. In terms of biological role, master enzyme that delivers sulfur to a number of partners involved in Fe-S cluster assembly, tRNA modification or cofactor biosynthesis. Catalyzes the removal of elemental sulfur from cysteine to produce alanine via an enzyme-bound persulfide intermediate. Functions as a sulfur delivery protein for Fe-S cluster synthesis. Cluster assembly on IscU homodimers proceeds sequentially from 1 2Fe-2S per dimer, to 2 2Fe-2S per dimer and finally 1 4Fe-4S per dimer. The chain is Cysteine desulfurase IscS from Azotobacter vinelandii.